Reading from the N-terminus, the 363-residue chain is Endopolygalacturonase A (363 aa).

A signal peptide spans 1 to 20 (MQLLQSSVIAATVGAALVAA). Residues 21 to 28 (VPVELEAR) constitute a propeptide that is removed on maturation. Cysteines 31 and 46 form a disulfide. PbH1 repeat units follow at residues 158–187 (SDNLNITDVTIDNSAGTAEGHNTDAFDVGS), 188–209 (STYINIDGATVYNQDDCLAINS), 210–230 (GSHITFTNGYCDGGHGLSIGS), 239–260 (VEDVTISNSKVVNSQNGVRIKT), 268–290 (VSNVKFEDITLSGITKYGLIVEQ), and 302–347 (TNGI…SITG). N-linked (GlcNAc...) asparagine glycosylation occurs at asparagine 162. Aspartate 202 serves as the catalytic Proton donor. A disulfide bond links cysteine 204 and cysteine 220. The active site involves histidine 224. 2 cysteine pairs are disulfide-bonded: cysteine 330/cysteine 335 and cysteine 354/cysteine 363.

It belongs to the glycosyl hydrolase 28 family.

It localises to the secreted. It carries out the reaction (1,4-alpha-D-galacturonosyl)n+m + H2O = (1,4-alpha-D-galacturonosyl)n + (1,4-alpha-D-galacturonosyl)m.. Involved in maceration and soft-rotting of plant tissue. Hydrolyzes the 1,4-alpha glycosidic bonds of de-esterified pectate in the smooth region of the plant cell wall. The polypeptide is Endopolygalacturonase A (pgaA) (Aspergillus flavus (strain ATCC MYA-384 / AF70)).